The chain runs to 551 residues: Glucans biosynthesis protein D (551 aa).

The tat-type signal signal peptide spans 1–32 (MDRRRFIKGSMAMAAVCGTSGIASLFSQAAFA).

This sequence belongs to the OpgD/OpgG family. Predicted to be exported by the Tat system. The position of the signal peptide cleavage has not been experimentally proven.

The protein localises to the periplasm. Its pathway is glycan metabolism; osmoregulated periplasmic glucan (OPG) biosynthesis. Its function is as follows. Probably involved in the control of the structural glucose backbone of osmoregulated periplasmic glucans (OPGs). The sequence is that of Glucans biosynthesis protein D from Escherichia coli O9:H4 (strain HS).